Here is a 660-residue protein sequence, read N- to C-terminus: Arginine--tRNA ligase, cytoplasmic (660 aa).

Met1 carries the post-translational modification N-acetylmethionine. The could be involved in the assembly of the multisynthetase complex stretch occupies residues 1-72; it reads MDGLVAQCSA…QAERKRPTKN (72 aa). L-arginine contacts are provided by residues 200-202, His211, Tyr384, Asp388, and Gln412; that span reads SPN. Residues 201–212 carry the 'HIGH' region motif; sequence PNIAKEMHVGHL. Positions 529-543 are interaction with tRNA; sequence NTAAYLLYAFTRIRS.

It belongs to the class-I aminoacyl-tRNA synthetase family. In terms of assembly, interacts (via N-terminus) with AIMP1 (via N-terminus); this stimulates its catalytic activity. Interacts (via N-terminus) with LARS2 (via C-terminus). Monomer. Part of a multisubunit complex that groups tRNA ligases for Arg (RARS1), Asp (DARS1), Gln (QARS1), Ile (IARS1), Leu (LARS1), Lys (KARS1), Met (MARS1) the bifunctional ligase for Glu and Pro (EPRS1) and the auxiliary subunits AIMP1/p43, AIMP2/p38 and EEF1E1/p18. Interacts with QARS1. Part of a complex composed of RARS1, QARS1 and AIMP1. In terms of tissue distribution, detected in dorsal root ganglion.

The protein resides in the cytoplasm. The protein localises to the cytosol. The catalysed reaction is tRNA(Arg) + L-arginine + ATP = L-arginyl-tRNA(Arg) + AMP + diphosphate. Its function is as follows. Forms part of a macromolecular complex that catalyzes the attachment of specific amino acids to cognate tRNAs during protein synthesis. Modulates the secretion of AIMP1 and may be involved in generation of the inflammatory cytokine EMAP2 from AIMP1. This Rattus norvegicus (Rat) protein is Arginine--tRNA ligase, cytoplasmic (Rars1).